A 103-amino-acid chain; its full sequence is Hexon-interlacing protein (103 aa).

Residues 25–45 (RQNVTGSDLGGKPVPSDVLES) are disordered. Residues 72–99 (LDDLKTQVAAMQNSVTAIQEELKDLKQR) are a coiled coil.

The protein belongs to the adenoviridae hexon-interlacing protein family. As to quaternary structure, homotrimer. Interacts with hexon protein; this interaction tethers the hexons together. Self-interacts with adjacent proteins. Interacts with kinesin light chain KLC1; this interaction leads to capsid disruption at the nuclear pore complex during virus entry into host cell.

It is found in the virion. Its subcellular location is the host nucleus. Functionally, structural component of the virion that acts as a cement protein on the capsid exterior and forms triskelion structures consisting of three molecules that stabilize three hexon trimers at the center of each icosahedral facet and fixes the peripentonal hexons. Dispensable for assembly. During virus entry, recruits the anterograde motor kinesin-1 to the capsid docked at the nuclear pore complex thereby subjecting the docked capsid to a pulling force. The resulting tension leads to capsid disruption, dispersion of capsid fragments toward cell periphery and eventually viral DNA entry into the host nucleus. The protein is Hexon-interlacing protein of Canine adenovirus serotype 1 (strain CLL) (CAdV-1).